Here is a 37-residue protein sequence, read N- to C-terminus: Protamine Z3 (37 aa).

Residues 1–37 (ARSRSRRSYGRGRRRGGRRRRRRRRRRRGGRRGRRSR) are disordered.

In terms of tissue distribution, testis.

The protein localises to the nucleus. It localises to the chromosome. Functionally, protamines substitute for histones in the chromatin of sperm during the haploid phase of spermatogenesis. They compact sperm DNA into a highly condensed, stable and inactive complex. The sequence is that of Protamine Z3 from Scyliorhinus canicula (Small-spotted catshark).